The sequence spans 229 residues: Large ribosomal subunit protein uL1 (229 aa).

It belongs to the universal ribosomal protein uL1 family. As to quaternary structure, part of the 50S ribosomal subunit.

Binds directly to 23S rRNA. The L1 stalk is quite mobile in the ribosome, and is involved in E site tRNA release. Its function is as follows. Protein L1 is also a translational repressor protein, it controls the translation of the L11 operon by binding to its mRNA. This is Large ribosomal subunit protein uL1 from Histophilus somni (strain 129Pt) (Haemophilus somnus).